We begin with the raw amino-acid sequence, 85 residues long: Small ribosomal subunit protein uS17 (85 aa).

Belongs to the universal ribosomal protein uS17 family. In terms of assembly, part of the 30S ribosomal subunit.

Functionally, one of the primary rRNA binding proteins, it binds specifically to the 5'-end of 16S ribosomal RNA. The sequence is that of Small ribosomal subunit protein uS17 from Mycoplasma genitalium (strain ATCC 33530 / DSM 19775 / NCTC 10195 / G37) (Mycoplasmoides genitalium).